A 128-amino-acid polypeptide reads, in one-letter code: Small ribosomal subunit protein bS6 (128 aa).

It belongs to the bacterial ribosomal protein bS6 family.

In terms of biological role, binds together with bS18 to 16S ribosomal RNA. The polypeptide is Small ribosomal subunit protein bS6 (Nitratiruptor sp. (strain SB155-2)).